A 284-amino-acid polypeptide reads, in one-letter code: Pantothenate synthetase (284 aa).

30-37 (MGNLHEGH) provides a ligand contact to ATP. His-37 functions as the Proton donor in the catalytic mechanism. Gln-61 is a (R)-pantoate binding site. Gln-61 is a beta-alanine binding site. ATP is bound at residue 149–152 (GEKD). Residue Gln-155 coordinates (R)-pantoate. Residues Val-178 and 186–189 (LSSR) contribute to the ATP site.

It belongs to the pantothenate synthetase family. As to quaternary structure, homodimer.

It localises to the cytoplasm. It carries out the reaction (R)-pantoate + beta-alanine + ATP = (R)-pantothenate + AMP + diphosphate + H(+). Its pathway is cofactor biosynthesis; (R)-pantothenate biosynthesis; (R)-pantothenate from (R)-pantoate and beta-alanine: step 1/1. Functionally, catalyzes the condensation of pantoate with beta-alanine in an ATP-dependent reaction via a pantoyl-adenylate intermediate. The protein is Pantothenate synthetase of Yersinia pestis bv. Antiqua (strain Antiqua).